Here is a 325-residue protein sequence, read N- to C-terminus: L-lactate dehydrogenase 1 (325 aa).

NAD(+) is bound by residues valine 17, aspartate 38, lysine 43, tyrosine 68, and 82–83 (GA). Substrate contacts are provided by residues glutamine 85, arginine 91, and 123–126 (NPVD). NAD(+) contacts are provided by residues 121–123 (AAN) and serine 146. Substrate is bound at residue 151–154 (DTAR). The beta-D-fructose 1,6-bisphosphate site is built by arginine 156 and histidine 171. Histidine 178 serves as the catalytic Proton acceptor. Tyrosine 223 bears the Phosphotyrosine mark. Residue threonine 232 coordinates substrate.

The protein belongs to the LDH/MDH superfamily. LDH family. Homotetramer.

The protein resides in the cytoplasm. It carries out the reaction (S)-lactate + NAD(+) = pyruvate + NADH + H(+). Its pathway is fermentation; pyruvate fermentation to lactate; (S)-lactate from pyruvate: step 1/1. With respect to regulation, allosterically activated by fructose 1,6-bisphosphate (FBP). In terms of biological role, catalyzes the conversion of lactate to pyruvate. The polypeptide is L-lactate dehydrogenase 1 (Lactococcus lactis subsp. cremoris (Streptococcus cremoris)).